The chain runs to 116 residues: MPLTPPPNPQKTYQIAILALGLVLLAFVLISDHSPKVGDHLHNLPFGGEYKDGTKSIKYFQRPNQHSLSKTLAKSHNTTIFLLILGLIVTLHGLHYFNNNRRVSSSLHCVLCQNKH.

Topologically, residues 1–11 (MPLTPPPNPQK) are cytoplasmic. Residues 12–32 (TYQIAILALGLVLLAFVLISD) form a helical membrane-spanning segment. Topologically, residues 33-77 (HSPKVGDHLHNLPFGGEYKDGTKSIKYFQRPNQHSLSKTLAKSHN) are lumenal. Residues 78-98 (TTIFLLILGLIVTLHGLHYFN) form a helical membrane-spanning segment. The Cytoplasmic segment spans residues 99–116 (NNRRVSSSLHCVLCQNKH).

It belongs to the Tymovirales TGBp2 protein family.

It is found in the host endoplasmic reticulum membrane. Functionally, plays a role in viral cell-to-cell propagation, by facilitating genome transport to neighboring plant cells through plasmosdesmata,. This is Movement protein TGB2 from White clover mosaic virus (strain M) (WCMV).